The chain runs to 635 residues: 1-deoxy-D-xylulose-5-phosphate synthase (635 aa).

Residues H77 and 118-120 (GHA) each bind thiamine diphosphate. A Mg(2+)-binding site is contributed by D150. Thiamine diphosphate is bound by residues 151-152 (AS), N179, Y290, and E372. A Mg(2+)-binding site is contributed by N179.

Belongs to the transketolase family. DXPS subfamily. Homodimer. It depends on Mg(2+) as a cofactor. Thiamine diphosphate is required as a cofactor.

It carries out the reaction D-glyceraldehyde 3-phosphate + pyruvate + H(+) = 1-deoxy-D-xylulose 5-phosphate + CO2. The protein operates within metabolic intermediate biosynthesis; 1-deoxy-D-xylulose 5-phosphate biosynthesis; 1-deoxy-D-xylulose 5-phosphate from D-glyceraldehyde 3-phosphate and pyruvate: step 1/1. Its function is as follows. Catalyzes the acyloin condensation reaction between C atoms 2 and 3 of pyruvate and glyceraldehyde 3-phosphate to yield 1-deoxy-D-xylulose-5-phosphate (DXP). This Leptospira borgpetersenii serovar Hardjo-bovis (strain JB197) protein is 1-deoxy-D-xylulose-5-phosphate synthase.